The sequence spans 101 residues: Small ribosomal subunit protein uS14 (101 aa).

Belongs to the universal ribosomal protein uS14 family. In terms of assembly, part of the 30S ribosomal subunit. Contacts proteins S3 and S10.

Binds 16S rRNA, required for the assembly of 30S particles and may also be responsible for determining the conformation of the 16S rRNA at the A site. This chain is Small ribosomal subunit protein uS14, found in Baumannia cicadellinicola subsp. Homalodisca coagulata.